The sequence spans 458 residues: Nuclear transcription factor Y subunit gamma (458 aa).

Over residues 305 to 315 (QQQFSQFTDGQ) the composition is skewed to low complexity. Positions 305–379 (QQQFSQFTDG…QQSSTSPPPS (75 aa)) are disordered. The segment covering 339 to 351 (TGNSTPCTSSLPT) has biased composition (polar residues).

It belongs to the NFYC/HAP5 subunit family. As to quaternary structure, heterotrimeric transcription factor composed of three components, NF-YA, NF-YB and NF-YC. NF-YB and NF-YC must interact and dimerize for NF-YA association and DNA binding.

The protein resides in the nucleus. Functionally, component of the sequence-specific heterotrimeric transcription factor (NF-Y) which specifically recognizes a 5'-CCAAT-3' box motif found in the promoters of its target genes. NF-Y can function as both an activator and a repressor, depending on its interacting cofactors. This is Nuclear transcription factor Y subunit gamma (NFYC) from Homo sapiens (Human).